Consider the following 489-residue polypeptide: Rhamnulokinase (489 aa).

13-17 (ASSGR) contributes to the ATP binding site. The cysteines at positions 68 and 222 are disulfide-linked. Residues Gly-83 and 236-238 (HDT) contribute to the substrate site. Asp-237 (proton acceptor) is an active-site residue. Thr-259 contributes to the ATP binding site. Asn-296 contacts substrate. Gln-304 lines the ATP pocket. Residues Cys-353 and Cys-370 are joined by a disulfide bond. Residue Gly-402 coordinates ATP. A disulfide bridge connects residues Cys-413 and Cys-417.

Belongs to the rhamnulokinase family. Monomer. It depends on Mg(2+) as a cofactor.

It catalyses the reaction L-rhamnulose + ATP = L-rhamnulose 1-phosphate + ADP + H(+). It functions in the pathway carbohydrate degradation; L-rhamnose degradation; glycerone phosphate from L-rhamnose: step 2/3. In terms of biological role, involved in the catabolism of L-rhamnose (6-deoxy-L-mannose). Catalyzes the transfer of the gamma-phosphate group from ATP to the 1-hydroxyl group of L-rhamnulose to yield L-rhamnulose 1-phosphate. This is Rhamnulokinase from Escherichia coli O9:H4 (strain HS).